A 270-amino-acid chain; its full sequence is Acyl-[acyl-carrier-protein]--UDP-N-acetylglucosamine O-acyltransferase (270 aa).

The protein belongs to the transferase hexapeptide repeat family. LpxA subfamily. In terms of assembly, homotrimer.

Its subcellular location is the cytoplasm. It catalyses the reaction a (3R)-hydroxyacyl-[ACP] + UDP-N-acetyl-alpha-D-glucosamine = a UDP-3-O-[(3R)-3-hydroxyacyl]-N-acetyl-alpha-D-glucosamine + holo-[ACP]. The protein operates within glycolipid biosynthesis; lipid IV(A) biosynthesis; lipid IV(A) from (3R)-3-hydroxytetradecanoyl-[acyl-carrier-protein] and UDP-N-acetyl-alpha-D-glucosamine: step 1/6. In terms of biological role, involved in the biosynthesis of lipid A, a phosphorylated glycolipid that anchors the lipopolysaccharide to the outer membrane of the cell. In Helicobacter pylori (strain HPAG1), this protein is Acyl-[acyl-carrier-protein]--UDP-N-acetylglucosamine O-acyltransferase.